The chain runs to 162 residues: Caveolin-2 (162 aa).

Residues 1-86 (MGLETEKADA…FEVSKYLIYK (86 aa)) are Cytoplasmic-facing. Phosphotyrosine; by SRC is present on Tyr-19. Residues 19–40 (YSRHSGLGYPEPEKCAKSTQDR) are disordered. A phosphoserine mark is found at Ser-20 and Ser-23. At Tyr-27 the chain carries Phosphotyrosine; by SRC. The span at 29 to 40 (EPEKCAKSTQDR) shows a compositional bias: basic and acidic residues. Phosphoserine is present on Ser-36. The segment at residues 87–107 (VLTVLLAIPLAFVAGILFATL) is an intramembrane region (helical). Residues 108–162 (SCLHIWIVVPFVKTCLMVLPSVQTVWHSITDGFIAPLYKSMGLIFSSISLRLSPE) lie on the Cytoplasmic side of the membrane.

It belongs to the caveolin family. Monomer or homodimer. Interacts with CAV1; the interaction forms a stable heterooligomeric complex that is required for targeting to lipid rafts and for caveolae formation. Tyrosine phosphorylated forms do not form heterooligomers with the Tyr-19-phosphorylated form existing as a monomer or dimer, and the Tyr-27-form as a monomer only. Interacts (tyrosine phosphorylated form) with the SH2 domain-containing proteins, RASA1, NCK1 and SRC. Interacts (tyrosine phosphorylated form) with INSR, the interaction (Tyr-27-phosphorylated form) is increased on insulin stimulation. Interacts (Tyr-19 phosphorylated form) with MAPK1 (phosphorylated form); the interaction, promoted by insulin, leads to nuclear location and MAPK1 activation. Interacts with STAT3; the interaction is increased on insulin-induced tyrosine phosphorylation leading to STAT activation. In terms of processing, phosphorylated on serine and tyrosine residues. CAV1 promotes phosphorylation on Ser-23 which then targets the complex to the plasma membrane, lipid rafts and caveolae. Phosphorylation on Ser-36 appears to modulate mitosis in endothelial cells. Phosphorylation on both Tyr-19 and Tyr-27 is required for insulin-induced 'Ser-727' phosphorylation of STAT3 and its activation. Phosphorylation on Tyr-19 is required for insulin-induced phosphorylation of MAPK1 and DNA binding of STAT3. Tyrosine phosphorylation is induced by both EGF and insulin (By. similarity).

Its subcellular location is the nucleus. It is found in the cytoplasm. The protein resides in the golgi apparatus membrane. It localises to the cell membrane. The protein localises to the membrane. Its subcellular location is the caveola. Its function is as follows. May act as a scaffolding protein within caveolar membranes. Interacts directly with G-protein alpha subunits and can functionally regulate their activity. Acts as an accessory protein in conjunction with CAV1 in targeting to lipid rafts and driving caveolae formation. The Ser-36 phosphorylated form has a role in modulating mitosis in endothelial cells. Positive regulator of cellular mitogenesis of the MAPK signaling pathway. Required for the insulin-stimulated nuclear translocation and activation of MAPK1 and STAT3, and the subsequent regulation of cell cycle progression. This Didelphis virginiana (North American opossum) protein is Caveolin-2 (CAV2).